We begin with the raw amino-acid sequence, 593 residues long: Glutamate decarboxylase 1 (593 aa).

The span at 1–12 (MASSTPSPATSS) shows a compositional bias: low complexity. Positions 1 to 22 (MASSTPSPATSSNAGADPNTTN) are disordered. Ser77 bears the Phosphoserine mark. 189-191 (QLS) is a 4-aminobutanoate binding site. Lys404 carries the N6-(pyridoxal phosphate)lysine modification. Arg566 is a 4-aminobutanoate binding site.

Belongs to the group II decarboxylase family. As to quaternary structure, homodimer. Requires pyridoxal 5'-phosphate as cofactor.

It catalyses the reaction L-glutamate + H(+) = 4-aminobutanoate + CO2. In terms of biological role, catalyzes the synthesis of the inhibitory neurotransmitter gamma-aminobutyric acid (GABA) with pyridoxal 5'-phosphate as cofactor. This is Glutamate decarboxylase 1 (Gad1) from Mus musculus (Mouse).